Reading from the N-terminus, the 410-residue chain is UBX domain-containing protein 3 (410 aa).

Disordered regions lie at residues 46–139 (EEDH…PDPK) and 154–212 (TISP…EKPL). Residues 65–85 (GSSSGISGGDQQPPRPLQRQQ) show a composition bias toward low complexity. Residues 86–97 (NTQGQGMKSGTA) show a composition bias toward polar residues. Phosphoserine occurs at positions 156, 167, and 186. The segment covering 163 to 174 (SGPSSLASSWAS) has biased composition (low complexity). Residues 183–196 (NEASGSTTPVTQSG) are compositionally biased toward polar residues. Position 190 is a phosphothreonine (Thr190). Residues 211 to 276 (PLRRTLYFWR…VQHRMDEDYV (66 aa)) form the SEP domain. A UBX domain is found at 334-410 (ENKPTTRIQV…KNASLVQKSL (77 aa)).

Interacts with cdc48.

In terms of biological role, involved in CDC48-dependent protein degradation through the ubiquitin/proteasome pathway. Involved in delivery of substrates to the 26S proteasome. Also required for membrane fusion and sporulation. This chain is UBX domain-containing protein 3 (ubx3), found in Schizosaccharomyces pombe (strain 972 / ATCC 24843) (Fission yeast).